A 71-amino-acid chain; its full sequence is SPI-2 type 3 secretion system needle filament protein (71 aa).

The protein belongs to the SctF family. The core secretion machinery of the T3SS is composed of approximately 20 different proteins, including cytoplasmic components, a base, an export apparatus and a needle. This subunit polymerizes and forms the helical needle filament.

Its subcellular location is the secreted. The protein localises to the cell surface. Its function is as follows. Component of the type III secretion system (T3SS), also called injectisome, which is used to inject bacterial effector proteins into eukaryotic host cells. SsaG/SctF2 forms the external needle filament that protrudes from the bacterial surface. Functionally, during infection, can induce innate immune responses. The needle proteins interact with host TLR2 or TLR4, and induce signaling by NF-kappa-B and/or AP-1. This activation is MyD88 dependent and results in increased expression of cytokines, including TNF-alpha, IL-6 and IL-8. This is SPI-2 type 3 secretion system needle filament protein from Salmonella typhimurium (strain LT2 / SGSC1412 / ATCC 700720).